The chain runs to 338 residues: Glycerol-3-phosphate dehydrogenase [NAD(P)+] (338 aa).

NADPH is bound by residues Trp11, Arg30, and Lys109. Sn-glycerol 3-phosphate contacts are provided by Lys109, Gly143, and Ser145. Ala147 contacts NADPH. Residues Lys198, Asp251, Ser261, Arg262, and Asn263 each coordinate sn-glycerol 3-phosphate. The Proton acceptor role is filled by Lys198. Arg262 contacts NADPH. Residues Val286 and Glu288 each coordinate NADPH.

It belongs to the NAD-dependent glycerol-3-phosphate dehydrogenase family.

The protein localises to the cytoplasm. It carries out the reaction sn-glycerol 3-phosphate + NAD(+) = dihydroxyacetone phosphate + NADH + H(+). It catalyses the reaction sn-glycerol 3-phosphate + NADP(+) = dihydroxyacetone phosphate + NADPH + H(+). Its pathway is membrane lipid metabolism; glycerophospholipid metabolism. Its function is as follows. Catalyzes the reduction of the glycolytic intermediate dihydroxyacetone phosphate (DHAP) to sn-glycerol 3-phosphate (G3P), the key precursor for phospholipid synthesis. This Cupriavidus necator (strain ATCC 17699 / DSM 428 / KCTC 22496 / NCIMB 10442 / H16 / Stanier 337) (Ralstonia eutropha) protein is Glycerol-3-phosphate dehydrogenase [NAD(P)+].